We begin with the raw amino-acid sequence, 208 residues long: Putative vomeronasal receptor-like protein 4 (208 aa).

The Extracellular portion of the chain corresponds to 1 to 19; it reads MEMTKLFSYIVIKNVYYPQ. A helical membrane pass occupies residues 20 to 40; it reads VSFGISANTFLLLFHIFTFAY. Topologically, residues 41–48 are cytoplasmic; the sequence is THRLKPID. Residues 49-69 form a helical membrane-spanning segment; that stretch reads MTISHLPLIHILLLFTQAILV. Over 70–97 the chain is Extracellular; sequence SSDLFESWNIQNNDLKCKIITFLNRVMR. The cysteines at positions 86 and 173 are disulfide-linked. Residues 98–118 traverse the membrane as a helical segment; sequence GVSICTTCLLSVLQAITISPS. Residues 119–135 are Cytoplasmic-facing; the sequence is TSFLEKFKHISANHTLG. The chain crosses the membrane as a helical span at residues 136-156; sequence FILFSWVLNMFITNNLLLFIV. The Extracellular segment spans residues 157–183; it reads PTPNRIGASLLFVTEHCYVLPMSYTHR. The chain crosses the membrane as a helical span at residues 184–204; that stretch reads SLFFILMVLRDVIFIGLMVLS. The Cytoplasmic segment spans residues 205 to 208; sequence SGYG.

Belongs to the G-protein coupled receptor 1 family. As to expression, expressed in olfactory nerve.

It localises to the cell membrane. Its function is as follows. Putative pheromone receptor. This is Putative vomeronasal receptor-like protein 4 (VN1R17P) from Homo sapiens (Human).